The following is a 72-amino-acid chain: Light-harvesting polypeptide B-885 alpha-1 chain (72 aa).

At Ser1 to Thr16 the chain is on the cytoplasmic side. Residues Val17–Leu37 form a helical membrane-spanning segment. Residue His33 coordinates a bacteriochlorophyll. Residues Gly38–Lys72 are Periplasmic-facing.

This sequence belongs to the antenna complex alpha subunit family. The core complex is formed by different alpha and beta chains, binding bacteriochlorophyll molecules, and arranged most probably in tetrameric structures disposed around the reaction center. The non-pigmented gamma chains may constitute additional components.

The protein resides in the cell inner membrane. Its function is as follows. Antenna complexes are light-harvesting systems, which transfer the excitation energy to the reaction centers. The polypeptide is Light-harvesting polypeptide B-885 alpha-1 chain (Rhodocyclus tenuis (Rhodospirillum tenue)).